Here is a 212-residue protein sequence, read N- to C-terminus: Interleukin-6 (212 aa).

Positions 1–29 (MNSFSTSAFGPVAFSLGLLLVLPAAFPAP) are cleaved as a signal peptide. Intrachain disulfides connect cysteine 72/cysteine 78 and cysteine 101/cysteine 111. Residue asparagine 73 is glycosylated (N-linked (GlcNAc...) asparagine). Residue asparagine 172 is glycosylated (N-linked (GlcNAc...) asparagine).

The protein belongs to the IL-6 superfamily. In terms of assembly, component of a hexamer of two molecules each of IL6, IL6R and IL6ST; first binds to IL6R to associate with the signaling subunit IL6ST. Interacts with IL6R (via the N-terminal ectodomain); this interaction may be affected by IL6R-binding with SORL1, hence decreasing IL6 cis signaling. Interacts with SORL1 (via the N-terminal ectodomain); this interaction leads to IL6 internalization and lysosomal degradation. May form a trimeric complex with the soluble SORL1 ectodomain and soluble IL6R receptor; this interaction might stabilize circulating IL6, hence promoting IL6 trans signaling.

The protein resides in the secreted. Functionally, cytokine with a wide variety of biological functions in immunity, tissue regeneration, and metabolism. Binds to IL6R, then the complex associates to the signaling subunit IL6ST/gp130 to trigger the intracellular IL6-signaling pathway. The interaction with the membrane-bound IL6R and IL6ST stimulates 'classic signaling', whereas the binding of IL6 and soluble IL6R to IL6ST stimulates 'trans-signaling'. Alternatively, 'cluster signaling' occurs when membrane-bound IL6:IL6R complexes on transmitter cells activate IL6ST receptors on neighboring receiver cells. IL6 is a potent inducer of the acute phase response. Rapid production of IL6 contributes to host defense during infection and tissue injury, but excessive IL6 synthesis is involved in disease pathology. In the innate immune response, is synthesized by myeloid cells, such as macrophages and dendritic cells, upon recognition of pathogens through toll-like receptors (TLRs) at the site of infection or tissue injury. In the adaptive immune response, is required for the differentiation of B cells into immunoglobulin-secreting cells. Plays a major role in the differentiation of CD4(+) T cell subsets. Essential factor for the development of T follicular helper (Tfh) cells that are required for the induction of germinal-center formation. Required to drive naive CD4(+) T cells to the Th17 lineage. Also required for proliferation of myeloma cells and the survival of plasmablast cells. Its function is as follows. Acts as an essential factor in bone homeostasis and on vessels directly or indirectly by induction of VEGF, resulting in increased angiogenesis activity and vascular permeability. Induces, through 'trans-signaling' and synergistically with IL1B and TNF, the production of VEGF. Involved in metabolic controls, is discharged into the bloodstream after muscle contraction increasing lipolysis and improving insulin resistance. 'Trans-signaling' in central nervous system also regulates energy and glucose homeostasis. Mediates, through GLP-1, crosstalk between insulin-sensitive tissues, intestinal L cells and pancreatic islets to adapt to changes in insulin demand. Also acts as a myokine. Plays a protective role during liver injury, being required for maintenance of tissue regeneration. Also has a pivotal role in iron metabolism by regulating HAMP/hepcidin expression upon inflammation or bacterial infection. Through activation of IL6ST-YAP-NOTCH pathway, induces inflammation-induced epithelial regeneration. This Cercocebus atys (Sooty mangabey) protein is Interleukin-6 (IL6).